The sequence spans 680 residues: DNA ligase (680 aa).

NAD(+) is bound by residues Asp44–Asp48, Ser93–Met94, and Glu125. Catalysis depends on Lys127, which acts as the N6-AMP-lysine intermediate. Positions 148, 182, 298, and 322 each coordinate NAD(+). Zn(2+) is bound by residues Cys416, Cys419, Cys434, and Cys439. A BRCT domain is found at Asn600–Gln680.

It belongs to the NAD-dependent DNA ligase family. LigA subfamily. The cofactor is Mg(2+). Mn(2+) serves as cofactor.

The catalysed reaction is NAD(+) + (deoxyribonucleotide)n-3'-hydroxyl + 5'-phospho-(deoxyribonucleotide)m = (deoxyribonucleotide)n+m + AMP + beta-nicotinamide D-nucleotide.. Its function is as follows. DNA ligase that catalyzes the formation of phosphodiester linkages between 5'-phosphoryl and 3'-hydroxyl groups in double-stranded DNA using NAD as a coenzyme and as the energy source for the reaction. It is essential for DNA replication and repair of damaged DNA. The sequence is that of DNA ligase from Limosilactobacillus reuteri (strain DSM 20016) (Lactobacillus reuteri).